Consider the following 233-residue polypeptide: Putative 26S proteasome non-ATPase regulatory subunit 8 homolog B (233 aa).

Methionine 1 is subject to N-acetylmethionine. Residues 38–217 (DHYLISLSLN…APCKEIPSLQ (180 aa)) form the PCI domain.

It belongs to the proteasome subunit S14 family. Component of the 19S regulatory particle (RP/PA700) lid subcomplex of the 26S proteasome. The 26S proteasome is composed of a core protease (CP), known as the 20S proteasome, capped at one or both ends by the 19S regulatory particle (RP/PA700). The RP/PA700 complex is composed of at least 17 different subunits in two subcomplexes, the base and the lid, which form the portions proximal and distal to the 20S proteolytic core, respectively. Interacts with UCH1 and UCH2.

In terms of biological role, acts as a regulatory subunit of the 26S proteasome which is involved in the ATP-dependent degradation of ubiquitinated proteins. The protein is Putative 26S proteasome non-ATPase regulatory subunit 8 homolog B of Arabidopsis thaliana (Mouse-ear cress).